Here is a 332-residue protein sequence, read N- to C-terminus: 2,3-diketo-L-gulonate reductase (332 aa).

Catalysis depends on H44, which acts as the Proton donor. NAD(+) is bound by residues 168–174 (ITMVDMS), 224–225 (WK), and 304–306 (GHE).

It belongs to the LDH2/MDH2 oxidoreductase family. DlgD subfamily. As to quaternary structure, homodimer.

Its subcellular location is the cytoplasm. It catalyses the reaction 3-dehydro-L-gulonate + NAD(+) = 2,3-dioxo-L-gulonate + NADH + H(+). It carries out the reaction 3-dehydro-L-gulonate + NADP(+) = 2,3-dioxo-L-gulonate + NADPH + H(+). Its function is as follows. Catalyzes the reduction of 2,3-diketo-L-gulonate in the presence of NADH, to form 3-keto-L-gulonate. This Salmonella typhi protein is 2,3-diketo-L-gulonate reductase.